The sequence spans 179 residues: Translation initiation factor IF-3 (179 aa).

The protein belongs to the IF-3 family. In terms of assembly, monomer.

It localises to the cytoplasm. Its function is as follows. IF-3 binds to the 30S ribosomal subunit and shifts the equilibrium between 70S ribosomes and their 50S and 30S subunits in favor of the free subunits, thus enhancing the availability of 30S subunits on which protein synthesis initiation begins. This chain is Translation initiation factor IF-3, found in Zymomonas mobilis subsp. mobilis (strain ATCC 31821 / ZM4 / CP4).